A 55-amino-acid polypeptide reads, in one-letter code: Protein CADMIUM TOLERANCE 1 (55 aa).

The chain crosses the membrane as a helical span at residues 24–40; it reads GCLYACIFTALCCFCCY.

This sequence belongs to the CYSTM1 family.

The protein localises to the cell membrane. It localises to the secreted. The protein resides in the cell wall. Functionally, confers resistance to heavy metal ions (e.g. cadmium (CdCl(2)) and copper (CuCl(2))) by chelating them at the plasma membrane of root cells, thus stopping their entry and reducing their accumulation. This chain is Protein CADMIUM TOLERANCE 1, found in Digitaria ciliaris (Southern crabgrass).